The sequence spans 209 residues: Ribosomal RNA large subunit methyltransferase E (209 aa).

Residues G63, W65, D83, D99, and D124 each contribute to the S-adenosyl-L-methionine site. The Proton acceptor role is filled by K164.

This sequence belongs to the class I-like SAM-binding methyltransferase superfamily. RNA methyltransferase RlmE family.

The protein localises to the cytoplasm. It carries out the reaction uridine(2552) in 23S rRNA + S-adenosyl-L-methionine = 2'-O-methyluridine(2552) in 23S rRNA + S-adenosyl-L-homocysteine + H(+). In terms of biological role, specifically methylates the uridine in position 2552 of 23S rRNA at the 2'-O position of the ribose in the fully assembled 50S ribosomal subunit. The sequence is that of Ribosomal RNA large subunit methyltransferase E from Alkalilimnicola ehrlichii (strain ATCC BAA-1101 / DSM 17681 / MLHE-1).